We begin with the raw amino-acid sequence, 278 residues long: 4-hydroxy-3-methylbut-2-enyl diphosphate reductase (278 aa).

Residue Cys-12 participates in [4Fe-4S] cluster binding. Residues His-36 and His-70 each coordinate (2E)-4-hydroxy-3-methylbut-2-enyl diphosphate. Dimethylallyl diphosphate is bound by residues His-36 and His-70. Residues His-36 and His-70 each coordinate isopentenyl diphosphate. Residue Cys-92 participates in [4Fe-4S] cluster binding. His-120 contacts (2E)-4-hydroxy-3-methylbut-2-enyl diphosphate. His-120 provides a ligand contact to dimethylallyl diphosphate. Isopentenyl diphosphate is bound at residue His-120. Residue Glu-122 is the Proton donor of the active site. Thr-158 lines the (2E)-4-hydroxy-3-methylbut-2-enyl diphosphate pocket. Cys-186 contributes to the [4Fe-4S] cluster binding site. (2E)-4-hydroxy-3-methylbut-2-enyl diphosphate is bound by residues Ser-214, Asn-216, and Ser-258. 3 residues coordinate dimethylallyl diphosphate: Ser-214, Asn-216, and Ser-258. Isopentenyl diphosphate-binding residues include Ser-214, Asn-216, and Ser-258.

It belongs to the IspH family. [4Fe-4S] cluster is required as a cofactor.

It catalyses the reaction isopentenyl diphosphate + 2 oxidized [2Fe-2S]-[ferredoxin] + H2O = (2E)-4-hydroxy-3-methylbut-2-enyl diphosphate + 2 reduced [2Fe-2S]-[ferredoxin] + 2 H(+). It carries out the reaction dimethylallyl diphosphate + 2 oxidized [2Fe-2S]-[ferredoxin] + H2O = (2E)-4-hydroxy-3-methylbut-2-enyl diphosphate + 2 reduced [2Fe-2S]-[ferredoxin] + 2 H(+). It functions in the pathway isoprenoid biosynthesis; dimethylallyl diphosphate biosynthesis; dimethylallyl diphosphate from (2E)-4-hydroxy-3-methylbutenyl diphosphate: step 1/1. Its pathway is isoprenoid biosynthesis; isopentenyl diphosphate biosynthesis via DXP pathway; isopentenyl diphosphate from 1-deoxy-D-xylulose 5-phosphate: step 6/6. Catalyzes the conversion of 1-hydroxy-2-methyl-2-(E)-butenyl 4-diphosphate (HMBPP) into a mixture of isopentenyl diphosphate (IPP) and dimethylallyl diphosphate (DMAPP). Acts in the terminal step of the DOXP/MEP pathway for isoprenoid precursor biosynthesis. This chain is 4-hydroxy-3-methylbut-2-enyl diphosphate reductase, found in Campylobacter lari (strain RM2100 / D67 / ATCC BAA-1060).